Consider the following 407-residue polypeptide: 12S rRNA N(4)-cytidine methyltransferase METTL15 (407 aa).

Residues 44–63 (EAQEETDQTGIQELHRSQDR) form a disordered region. S-adenosyl-L-methionine is bound by residues 100–102 (GGH), Asp-119, Phe-146, Asp-169, and Gln-176. Ser-358 is modified (phosphoserine). A disordered region spans residues 386–407 (EDEDVQDNPRGRSAKLRAAIKL). The segment covering 397–407 (RSAKLRAAIKL) has biased composition (basic residues).

Belongs to the methyltransferase superfamily. RsmH family.

The protein resides in the mitochondrion matrix. The catalysed reaction is cytidine(839) in 12S rRNA + S-adenosyl-L-methionine = N(4)-methylcytidine(839) in 12S rRNA + S-adenosyl-L-homocysteine + H(+). In terms of biological role, N4-methylcytidine (m4C) methyltransferase responsible for the methylation of position C839 in mitochondrial 12S rRNA. Involved in the stabilization of 12S rRNA folding, therefore facilitating the assembly of the mitochondrial small ribosomal subunits. This Bos taurus (Bovine) protein is 12S rRNA N(4)-cytidine methyltransferase METTL15 (METTL15).